An 898-amino-acid polypeptide reads, in one-letter code: Phosphoenolpyruvate carboxylase (898 aa).

Active-site residues include histidine 138 and lysine 561.

It belongs to the PEPCase type 1 family. The cofactor is Mg(2+).

It catalyses the reaction oxaloacetate + phosphate = phosphoenolpyruvate + hydrogencarbonate. Its function is as follows. Forms oxaloacetate, a four-carbon dicarboxylic acid source for the tricarboxylic acid cycle. The sequence is that of Phosphoenolpyruvate carboxylase from Streptococcus suis (strain 98HAH33).